We begin with the raw amino-acid sequence, 394 residues long: Na(+)/H(+) antiporter NhaA (394 aa).

The next 11 helical transmembrane spans lie at 14-34 (AGGLILIIAAAIALLMANSAL), 59-79 (LLLWINDGLMAVFFLMVGLEV), 95-115 (VFPAIAALGGMLAPALIYLLF), 125-145 (GWAIPAATDIAFALGVMALLG), 154-174 (VFLLALAIIDDLGVIIIIALF), 179-199 (VSLQSLGIAAAAIALLAYMNW), 213-233 (LVLWVCILKSGVHATLAGVIV), 254-274 (GLHPWVAYLILPLFAFANAGV), 292-312 (IATGLFIGKPLGIFTFSWLAV), 328-348 (IFAVSVLCGIGFTMSIFIASL), and 363-383 (LGILLGSTTAAVVGYSLLRLV).

The protein belongs to the NhaA Na(+)/H(+) (TC 2.A.33) antiporter family.

It localises to the cell inner membrane. The catalysed reaction is Na(+)(in) + 2 H(+)(out) = Na(+)(out) + 2 H(+)(in). In terms of biological role, na(+)/H(+) antiporter that extrudes sodium in exchange for external protons. The protein is Na(+)/H(+) antiporter NhaA of Yersinia pseudotuberculosis serotype IB (strain PB1/+).